A 205-amino-acid polypeptide reads, in one-letter code: Large ribosomal subunit protein uL18 (205 aa).

It belongs to the universal ribosomal protein uL18 family. As to quaternary structure, part of the 50S ribosomal subunit. Contacts the 5S and 23S rRNAs.

Its function is as follows. This is one of the proteins that bind and probably mediate the attachment of the 5S RNA into the large ribosomal subunit, where it forms part of the central protuberance. The polypeptide is Large ribosomal subunit protein uL18 (Pyrobaculum aerophilum (strain ATCC 51768 / DSM 7523 / JCM 9630 / CIP 104966 / NBRC 100827 / IM2)).